The sequence spans 252 residues: Large ribosomal subunit protein uL29m (252 aa).

Position 146 is an N6-acetyllysine (K146).

The protein belongs to the universal ribosomal protein uL29 family. As to quaternary structure, component of the mitochondrial ribosome large subunit (39S) which comprises a 16S rRNA and about 50 distinct proteins.

The protein resides in the mitochondrion. The polypeptide is Large ribosomal subunit protein uL29m (MRPL47) (Bos taurus (Bovine)).